The chain runs to 353 residues: uncharacterized protein (353 aa).

The signal sequence occupies residues 1–28; that stretch reads MHLTIMRRFAVLLLLAIFLGGCSGSNGA.

This is an uncharacterized protein from Archaeoglobus fulgidus (strain ATCC 49558 / DSM 4304 / JCM 9628 / NBRC 100126 / VC-16).